The sequence spans 380 residues: Protein FAM110B (380 aa).

Residues 92 to 272 are disordered; that stretch reads ALGSPTLKGF…RPSLQRSKSD (181 aa). Over residues 100-110 the composition is skewed to gly residues; the sequence is GFGGGGGGAKS. Positions 127 to 138 are enriched in polar residues; sequence ILNSSEGSSTGS. The segment covering 153-162 has biased composition (basic and acidic residues); that stretch reads DAAELHRHSF. Residues 239–248 are compositionally biased toward low complexity; that stretch reads KVAAPAAVKS. Phosphoserine occurs at positions 248 and 311. The tract at residues 327 to 347 is disordered; it reads DCEQSQDSNSDLRNDDSANDR. Positions 336–345 are enriched in basic and acidic residues; it reads SDLRNDDSAN.

The protein belongs to the FAM110 family.

The protein localises to the cytoplasm. It localises to the cytoskeleton. Its subcellular location is the microtubule organizing center. The protein resides in the centrosome. This Bos taurus (Bovine) protein is Protein FAM110B (FAM110B).